The sequence spans 158 residues: 6,7-dimethyl-8-ribityllumazine synthase (158 aa).

Residues Phe24, Ala58–Glu60, and Ala82–Ile84 contribute to the 5-amino-6-(D-ribitylamino)uracil site. Gly87 to Thr88 lines the (2S)-2-hydroxy-3-oxobutyl phosphate pocket. The active-site Proton donor is the His90. Phe115 contacts 5-amino-6-(D-ribitylamino)uracil. Arg129 is a (2S)-2-hydroxy-3-oxobutyl phosphate binding site.

It belongs to the DMRL synthase family. In terms of assembly, forms an icosahedral capsid composed of 60 subunits, arranged as a dodecamer of pentamers.

It carries out the reaction (2S)-2-hydroxy-3-oxobutyl phosphate + 5-amino-6-(D-ribitylamino)uracil = 6,7-dimethyl-8-(1-D-ribityl)lumazine + phosphate + 2 H2O + H(+). The protein operates within cofactor biosynthesis; riboflavin biosynthesis; riboflavin from 2-hydroxy-3-oxobutyl phosphate and 5-amino-6-(D-ribitylamino)uracil: step 1/2. Catalyzes the formation of 6,7-dimethyl-8-ribityllumazine by condensation of 5-amino-6-(D-ribitylamino)uracil with 3,4-dihydroxy-2-butanone 4-phosphate. This is the penultimate step in the biosynthesis of riboflavin. The chain is 6,7-dimethyl-8-ribityllumazine synthase from Ectopseudomonas mendocina (strain ymp) (Pseudomonas mendocina).